We begin with the raw amino-acid sequence, 316 residues long: Pantothenate kinase (316 aa).

95–102 (GSVAVGKS) lines the ATP pocket.

This sequence belongs to the prokaryotic pantothenate kinase family.

The protein localises to the cytoplasm. It catalyses the reaction (R)-pantothenate + ATP = (R)-4'-phosphopantothenate + ADP + H(+). It functions in the pathway cofactor biosynthesis; coenzyme A biosynthesis; CoA from (R)-pantothenate: step 1/5. This Serratia proteamaculans (strain 568) protein is Pantothenate kinase.